The chain runs to 353 residues: UDP-N-acetylglucosamine--N-acetylmuramyl-(pentapeptide) pyrophosphoryl-undecaprenol N-acetylglucosamine transferase (353 aa).

UDP-N-acetyl-alpha-D-glucosamine contacts are provided by residues N123, R161, S189, I243, 262–267 (ALTVSE), and Q287.

The protein belongs to the glycosyltransferase 28 family. MurG subfamily.

Its subcellular location is the cell membrane. The catalysed reaction is di-trans,octa-cis-undecaprenyl diphospho-N-acetyl-alpha-D-muramoyl-L-alanyl-D-glutamyl-meso-2,6-diaminopimeloyl-D-alanyl-D-alanine + UDP-N-acetyl-alpha-D-glucosamine = di-trans,octa-cis-undecaprenyl diphospho-[N-acetyl-alpha-D-glucosaminyl-(1-&gt;4)]-N-acetyl-alpha-D-muramoyl-L-alanyl-D-glutamyl-meso-2,6-diaminopimeloyl-D-alanyl-D-alanine + UDP + H(+). It participates in cell wall biogenesis; peptidoglycan biosynthesis. Cell wall formation. Catalyzes the transfer of a GlcNAc subunit on undecaprenyl-pyrophosphoryl-MurNAc-pentapeptide (lipid intermediate I) to form undecaprenyl-pyrophosphoryl-MurNAc-(pentapeptide)GlcNAc (lipid intermediate II). In Buchnera aphidicola subsp. Baizongia pistaciae (strain Bp), this protein is UDP-N-acetylglucosamine--N-acetylmuramyl-(pentapeptide) pyrophosphoryl-undecaprenol N-acetylglucosamine transferase.